The following is a 233-amino-acid chain: Phosphatidylserine decarboxylase proenzyme (233 aa).

Residue serine 190 is the Schiff-base intermediate with substrate; via pyruvic acid of the active site. Residue serine 190 is modified to Pyruvic acid (Ser); by autocatalysis.

This sequence belongs to the phosphatidylserine decarboxylase family. PSD-A subfamily. As to quaternary structure, heterodimer of a large membrane-associated beta subunit and a small pyruvoyl-containing alpha subunit. It depends on pyruvate as a cofactor. Post-translationally, is synthesized initially as an inactive proenzyme. Formation of the active enzyme involves a self-maturation process in which the active site pyruvoyl group is generated from an internal serine residue via an autocatalytic post-translational modification. Two non-identical subunits are generated from the proenzyme in this reaction, and the pyruvate is formed at the N-terminus of the alpha chain, which is derived from the carboxyl end of the proenzyme. The post-translation cleavage follows an unusual pathway, termed non-hydrolytic serinolysis, in which the side chain hydroxyl group of the serine supplies its oxygen atom to form the C-terminus of the beta chain, while the remainder of the serine residue undergoes an oxidative deamination to produce ammonia and the pyruvoyl prosthetic group on the alpha chain.

It localises to the cell membrane. It carries out the reaction a 1,2-diacyl-sn-glycero-3-phospho-L-serine + H(+) = a 1,2-diacyl-sn-glycero-3-phosphoethanolamine + CO2. Its pathway is phospholipid metabolism; phosphatidylethanolamine biosynthesis; phosphatidylethanolamine from CDP-diacylglycerol: step 2/2. In terms of biological role, catalyzes the formation of phosphatidylethanolamine (PtdEtn) from phosphatidylserine (PtdSer). The protein is Phosphatidylserine decarboxylase proenzyme of Xanthobacter autotrophicus (strain ATCC BAA-1158 / Py2).